The chain runs to 455 residues: Probable glycine dehydrogenase (decarboxylating) subunit 1 (455 aa).

This sequence belongs to the GcvP family. N-terminal subunit subfamily. The glycine cleavage system is composed of four proteins: P, T, L and H. In this organism, the P 'protein' is a heterodimer of two subunits.

It catalyses the reaction N(6)-[(R)-lipoyl]-L-lysyl-[glycine-cleavage complex H protein] + glycine + H(+) = N(6)-[(R)-S(8)-aminomethyldihydrolipoyl]-L-lysyl-[glycine-cleavage complex H protein] + CO2. Its function is as follows. The glycine cleavage system catalyzes the degradation of glycine. The P protein binds the alpha-amino group of glycine through its pyridoxal phosphate cofactor; CO(2) is released and the remaining methylamine moiety is then transferred to the lipoamide cofactor of the H protein. The sequence is that of Probable glycine dehydrogenase (decarboxylating) subunit 1 from Francisella tularensis subsp. mediasiatica (strain FSC147).